The chain runs to 896 residues: Desmocollin-3 (896 aa).

The first 26 residues, 1–26 (MAAPGSGAPCAELCRQLLLTLVVFSF), serve as a signal peptide directing secretion. The propeptide occupies 27–134 (ACEACKKEIF…KETVLRRSKR (108 aa)). 5 consecutive Cadherin domains span residues 135–242 (RWAP…HPIF), 243–354 (TEAV…LPTF), 355–471 (RQNA…GPEC), 472–579 (SPEV…EILQ), and 580–690 (DYLV…ILGK). Topologically, residues 135–690 (RWAPIPCSMQ…RRSADVILGK (556 aa)) are extracellular. N-linked (GlcNAc...) asparagine glycosylation is present at N165. N-linked (GlcNAc...) asparagine glycosylation is found at N391, N546, and N629. A helical membrane pass occupies residues 691–711 (WAILAILLGIALLFSILLTLV). Topologically, residues 712 to 896 (CGIVSARNKK…AALAKTCTKR (185 aa)) are cytoplasmic.

In terms of assembly, may form homodimers. Interacts with DSG1; there is evidence to suggest that the interaction promotes cell-cell adhesion of keratinocytes. As to expression, expressed in stratified epithelia only, such as the epidermis, tongue, esophagus and rumen (at protein level).

It localises to the cell membrane. It is found in the cell junction. The protein localises to the desmosome. The protein resides in the cytoplasm. A component of desmosome cell-cell junctions which are required for positive regulation of cellular adhesion. Required for cell-cell adhesion in the epidermis, as a result required for the maintenance of the dermal cohesion and the dermal barrier function. Required for cell-cell adhesion of epithelial cell layers surrounding the telogen hair club, as a result plays an important role in telogen hair shaft anchorage. Essential for successful completion of embryo compaction and embryo development. This is Desmocollin-3 (DSC3) from Bos taurus (Bovine).